The sequence spans 1333 residues: Partitioning defective 3 homolog (1333 aa).

Phosphoserine is present on Ser25. Thr91 carries the phosphothreonine modification. Positions 143–262 (SSDPALTGLS…VGHADTGLEN (120 aa)) are disordered. 2 stretches are compositionally biased toward polar residues: residues 150-163 (GLST…FSSE) and 171-187 (TRWS…TAGS). A phosphoserine mark is found at Ser156 and Ser174. Over residues 190-203 (TCDRKKDENYRSLP) the composition is skewed to basic and acidic residues. Polar residues predominate over residues 207 to 224 (SSWSNQFQRDNARSSLSA). Positions 271–359 (MVKLVQVPND…ARVIWFHVVP (89 aa)) constitute a PDZ 1 domain. Disordered stretches follow at residues 369-388 (LSQR…DSHC) and 397-441 (NAPQ…APPS). The residue at position 383 (Ser383) is a Phosphoserine. PDZ domains lie at 461–546 (NIQL…LVFR) and 590–677 (EVPL…GMIQ). Position 489 is a phosphotyrosine (Tyr489). Ser692, Ser695, Ser715, Ser728, Ser806, and Ser824 each carry phosphoserine. Interaction with PRKCI and PRKCZ stretches follow at residues 712–932 (RRIS…YDKP) and 712–936 (RRIS…MVDD). Lys831 carries the post-translational modification N6-acetyllysine. Residue Ser834 is modified to Phosphoserine. Lys848 carries the post-translational modification N6-acetyllysine. Residues Ser849 and Ser869 each carry the phosphoserine modification. 5 disordered regions span residues 861 to 884 (TVDD…KKSS), 928 to 1011 (SYDK…AKKG), 1024 to 1071 (KHRK…ERQA), 1110 to 1267 (PQSP…LGGH), and 1283 to 1333 (QEQR…PFYS). Lys881 bears the N6-acetyllysine mark. The segment at 931 to 1333 (KPMVDDDDEG…TPEKGRPFYS (403 aa)) is interaction with FRMD4A. Residues 935 to 949 (DDDDEGMETLEEDTE) are compositionally biased toward acidic residues. Position 958 is a phosphoserine; by AURKA (Ser958). Ser967 and Ser969 each carry phosphoserine. Composition is skewed to basic and acidic residues over residues 977–1005 (DPEK…EKDK) and 1026–1039 (RKDD…RIKI). Ser1042 bears the Phosphoserine mark. Residues 1046–1071 (EEDRVRMKEEQERIQAKTREFRERQA) show a composition bias toward basic and acidic residues. Residues 1046–1078 (EEDRVRMKEEQERIQAKTREFRERQARERDYAE) adopt a coiled-coil conformation. Residues 1134-1143 (PGDSNRSTPS) show a composition bias toward polar residues. Residues 1144–1171 (NHDRIQRLRQEFQQAKQDEDVEDRRRTY) show a composition bias toward basic and acidic residues. Coiled coils occupy residues 1145–1168 (HDRI…EDRR), 1195–1218 (VQVQ…YSSL), and 1274–1295 (MLET…LKKQ). Positions 1176–1199 (SWSSSRPASQSGRHSVSVEVQVQR) are enriched in low complexity. Polar residues predominate over residues 1215–1236 (YSSLPRQSRKNASSISQDSWEQ). Positions 1283 to 1292 (QEQRRKEQQL) are enriched in basic and acidic residues. Positions 1314–1323 (SQVARLNRLQ) are enriched in polar residues. Over residues 1324 to 1333 (TPEKGRPFYS) the composition is skewed to basic and acidic residues. N6-acetyllysine is present on Lys1327.

The protein belongs to the PAR3 family. Interacts with PRCKI and CDH5. Interacts (via PDZ 3 domain) with PTEN (via C-terminus). Component of a complex whose core is composed of ARHGAP17, AMOT, PALS1, PATJ and PARD3/PAR3. Interacts with LIMK2, AURKA and AURKB. Component of the Par polarity complex, composed of at least phosphorylated PRKCZ, PARD3 and TIAM1. Interacts with ECT2 and FBF1. Interacts (via PDZ 1 domain) with F11R/JAM1, PARD6A and PARD6B. Part of a complex with PARD6A or PARD6B, PRKCI or PRKCZ and CDC42 or RAC1. Directly interacts with TIAM1 and TIAM2. Interacts with SIRT2. Interacts (via coiled-coil domain) with FRMD4A. Found in a complex with PARD3, CYTH1 and FRMD4A. Interacts with SAPCD2. Interacts with PRKCA. In terms of assembly, interacts with PRKCZ. Acetylated. Deacetylated by SIRT2, thereby inhibiting Schwann cell peripheral myelination. Post-translationally, phosphorylation at Ser-824 by PRKCZ and PRKCI occurs at the most apical tip of epithelial cell-cell contacts during the initial phase of tight junction formation and may promote dissociation of the complex with PARD6. EGF-induced Tyr-1123 phosphorylation mediates dissociation from LIMK2. Phosphorylation by AURKA at Ser-958 is required for the normal establishment of neuronal polarity. Isoform 4 and isoform 5 are phosphorylated during oocyte maturation. As to expression, all isoforms are expressed in heart, while expression in brain is mainly limited to isoform 1, and to isoform 3 to a weaker level.

It is found in the cytoplasm. Its subcellular location is the endomembrane system. It localises to the cell junction. The protein resides in the tight junction. The protein localises to the adherens junction. It is found in the cell cortex. Its subcellular location is the cytoskeleton. It localises to the cell membrane. In terms of biological role, adapter protein involved in asymmetrical cell division and cell polarization processes. Seems to play a central role in the formation of epithelial tight junctions. Targets the phosphatase PTEN to cell junctions. Association with PARD6B may prevent the interaction of PARD3 with F11R/JAM1, thereby preventing tight junction assembly. The PARD6-PARD3 complex links GTP-bound Rho small GTPases to atypical protein kinase C proteins. Required for establishment of neuronal polarity and normal axon formation in cultured hippocampal neurons. Involved in Schwann cell peripheral myelination. In Mus musculus (Mouse), this protein is Partitioning defective 3 homolog (Pard3).